The chain runs to 860 residues: Leucine--tRNA ligase (860 aa).

Residues 42–52 carry the 'HIGH' region motif; sequence PYPSGRLHMGH. The 'KMSKS' region motif lies at 619–623; that stretch reads KMSKS. Lysine 622 is a binding site for ATP.

This sequence belongs to the class-I aminoacyl-tRNA synthetase family.

It is found in the cytoplasm. The catalysed reaction is tRNA(Leu) + L-leucine + ATP = L-leucyl-tRNA(Leu) + AMP + diphosphate. In Salmonella typhimurium (strain LT2 / SGSC1412 / ATCC 700720), this protein is Leucine--tRNA ligase.